Consider the following 386-residue polypeptide: Galactokinase (386 aa).

Residue 35 to 38 coordinates substrate; it reads EHTD. Residues Ser69 and 125–131 contribute to the ATP site; that span reads GAGLSSS. 2 residues coordinate Mg(2+): Ser131 and Glu163. Asp175 acts as the Proton acceptor in catalysis. A substrate-binding site is contributed by Tyr224.

It belongs to the GHMP kinase family. GalK subfamily.

Its subcellular location is the cytoplasm. The enzyme catalyses alpha-D-galactose + ATP = alpha-D-galactose 1-phosphate + ADP + H(+). It functions in the pathway carbohydrate metabolism; galactose metabolism. Its function is as follows. Catalyzes the transfer of the gamma-phosphate of ATP to D-galactose to form alpha-D-galactose-1-phosphate (Gal-1-P). This chain is Galactokinase, found in Vibrio vulnificus (strain CMCP6).